Consider the following 644-residue polypeptide: Polyglycine hydrolase (644 aa).

A signal peptide spans 1–23; the sequence is MYTSRSLFSTLASCLSLATLVAS. Asparagine 100, asparagine 144, asparagine 159, asparagine 244, and asparagine 340 each carry an N-linked (GlcNAc...) asparagine glycan. A disulfide bridge links cysteine 149 with cysteine 183. Residue serine 369 is part of the active site. Asparagine 389, asparagine 410, asparagine 443, and asparagine 486 each carry an N-linked (GlcNAc...) asparagine glycan.

The protein belongs to the peptidase S12 family.

The protein resides in the secreted. It carries out the reaction a glycyl-glycyl-[protein] + H2O = N-terminal glycyl-[protein] + [protein]-C-terminal glycine. Not inhibited by phenylmethylsulfonyl fluoride (PMSF; serine peptidase class S1 inhibitor), clavulanic acid (beta-lactamase inhibitor) or ampicillin (penicillin-binding protein (PBP) inhibitor). Functionally, serine-type endopeptidase that cleaves Gly-Gly bonds in the polyglycine linker of host plant class IV chitinases to disrupt their chitin-binding, and thereby plays a role in lowering the defense responses of the host to the fungus. Degrades Z.mays Endochitinase A (CHIA). Has low proteolytic activity on Z.mays Endochitinase B (CHIB). The polypeptide is Polyglycine hydrolase (Cochliobolus carbonum (strain 26-R-13) (Maize leaf spot fungus)).